We begin with the raw amino-acid sequence, 1196 residues long: MNIDKALVLRTCANNMADHCGLIWPASGTVESKYWQSTRRHENGLVGLLWGAGTSAFLSVHADARWKVCEVAVADIIGLEEPGMVKFPRAEVVHVGDRISASHFISARQADPASTPTPTPTPMATPTPAAANIALPVVEQPSHEVFDVALVSAAAPSVNTLPVTTPQNLQTATYGSTLSGDNNSRLIAGYGSNETAGNHSDLIAGYGSTGTAGSDSSLVAGYGSTQTAGGDSALTAGYGSTQTAREGSNLTAGYGSTGTAGSDSSLIAGYGSTQTSGEDSSLTAGYGSTQTAQEGSNLTAGYGSTGTAGSDSSLIAGYGSTQTSGGDSSLTAGYGSTQTAQEGSNLTSGYGSTGTAGADSSLIAGYGSTQTSGSDSALTAGYGSTQTAQEGSNLTAGYGSTGTAGSDSSLIAGYGSTQTSGSDSSLTAGYGSTQTAQEGSNLTAGYGSTGTAGVDSSLIAGYGSTQTSGSDSALTAGYGSTQTAQEGSNLTAGYGSTGTAGADSSLIAGYGSTQTSGSESSLTAGYGSTQTAREGSTLTAGYGSTGTAGADSSLIAGYGSTQTSGSDSSLTAGYGSTQTAQQGSVLTSGYGSTQTAGAASNLTTGYGSTGTAGHESFIIAGYGSTQTAGHKSILTAGYGSTQTARDGSDLVAGYGSTGTAGSGSSLIAGYGSTQTASYKSMLTAGYGSTQTAREHSDLVAGYGSTSTAGSNSSLIAGYGSTQTAGFKSIMTAGYGSTQTAQERSDLVAGYGSTSTAGYSSSLIAGYGSTQTAGYGSTLTTGYGSTQTAQENSSLTTGYGSTSTAGYSSSLIAGYGSTQTAGYESTLTAGYGSTQTAQERSDLVTGYGSTSTAGYASSLIAGYGSTQTAGYESTLTAGYGSTQTAQENSSLTTGYGSTSTAGFASSLIAGYGSTQTAGYKSTLTAGYGSTQTAEYGSSLTAGYGSTATAGQDSSLIAGYGSTLTSGIRSFLTAGYGSTLIAGLRSVLIAGYGSSLTSGIRSTLTAGYGSNQIASYGSSLIAGHESIQVAGNKSMLIAGKGSSQTAGFRSTLIAGAGSVQLAGDRSRLIAGADSNQTAGDRSKLLAGNNSYLTAGDRSKLTGGHDCTLMAGDQSRLTAGKNSILTAGARSKLIGSEGSTLSAGEDSTLIFRLWDGKRYRQLVARTGENGVEADIPYYVNEDDDIVDKPDEDDDWIEVE.

The tract at residues 172 to 1147 is octapeptide periodicity; that stretch reads ATYGSTLSGD…LSAGEDSTLI (976 aa). Disordered regions lie at residues 269–304, 319–352, and 415–442; these read GYGS…GYGS, GSTQ…GYGS, and GSTQ…GSNL. Composition is skewed to polar residues over residues 271–298 and 319–346; these read GSTQ…GSNL.

The protein belongs to the bacterial ice nucleation protein family. Membrane environment or aggregation seems to be required for ice nucleation activity.

It localises to the cell outer membrane. Ice nucleation proteins enable bacteria to nucleate crystallization in supercooled water. In Pseudomonas syringae, this protein is Ice nucleation protein (inaV).